A 124-amino-acid polypeptide reads, in one-letter code: CRISPR-associated endoribonuclease Cas2 4 (124 aa).

Position 40 (Asp40) interacts with Mg(2+).

The protein belongs to the CRISPR-associated endoribonuclease Cas2 protein family. Homodimer, forms a heterotetramer with a Cas1 homodimer. Requires Mg(2+) as cofactor.

In terms of biological role, CRISPR (clustered regularly interspaced short palindromic repeat), is an adaptive immune system that provides protection against mobile genetic elements (viruses, transposable elements and conjugative plasmids). CRISPR clusters contain sequences complementary to antecedent mobile elements and target invading nucleic acids. CRISPR clusters are transcribed and processed into CRISPR RNA (crRNA). Functions as a ssRNA-specific endoribonuclease. Involved in the integration of spacer DNA into the CRISPR cassette. The sequence is that of CRISPR-associated endoribonuclease Cas2 4 from Rhodospirillum rubrum (strain ATCC 11170 / ATH 1.1.1 / DSM 467 / LMG 4362 / NCIMB 8255 / S1).